The sequence spans 274 residues: Long chain fatty acid elongase 2 (274 aa).

The next 7 membrane-spanning stretches (helical) occupy residues 29-49, 73-93, 115-135, 140-160, 170-190, 201-221, and 238-258; these read MSTF…TIYF, FSLF…GVFM, FWGW…MFLV, PVIF…VVTY, SLAL…VRAL, FITT…GHLV, and VLSI…KFFY.

This sequence belongs to the ELO family. Expressed in various tissues and parts of the body, including the ventral cord, pharyngeal muscles, uterus, and the tail, and most strongly in intestinal cells.

It localises to the membrane. It carries out the reaction hexadecanoyl-CoA + malonyl-CoA + H(+) = 3-oxooctadecanoyl-CoA + CO2 + CoA. It functions in the pathway lipid metabolism; fatty acid biosynthesis. Catalyzes the first and rate-limiting reaction of the four reactions that constitute the long-chain fatty acids elongation cycle. Uses malonyl-CoA to add 2 carbons per cycle to the chain of long-chain fatty acids. Condensing enzyme responsible for the elongation of palmitate (hexadecanoate, 16:0), also involved in polyunsaturated fatty acid (PUFA) biosynthesis. In Caenorhabditis elegans, this protein is Long chain fatty acid elongase 2.